The primary structure comprises 253 residues: Pupal cuticle protein (253 aa).

Residues 1 to 18 (MKSMIVVACLALACGAHA) form the signal peptide. The span at 54-66 (LQQASKNNPNPND) shows a compositional bias: polar residues. The segment at 54-74 (LQQASKNNPNPNDDGSYDPRW) is disordered. A run of 3 repeats spans residues 97–100 (AAPA), 115–118 (AAPA), and 154–157 (AAPA). The segment covering 155–167 (APAQQQWNAPAHQ) has biased composition (low complexity). Disordered stretches follow at residues 155–178 (APAQ…QDWN) and 187–206 (APAH…APAH). Positions 189–201 (AHQSWNGAPSWQS) are enriched in polar residues.

Functionally, component of the cuticle of the pupae of silk moth. This Bombyx mori (Silk moth) protein is Pupal cuticle protein (PCP).